We begin with the raw amino-acid sequence, 249 residues long: 5'-nucleotidase SurE (249 aa).

Asp-8, Asp-9, Ser-39, and Asn-91 together coordinate a divalent metal cation.

This sequence belongs to the SurE nucleotidase family. A divalent metal cation is required as a cofactor.

Its subcellular location is the cytoplasm. The enzyme catalyses a ribonucleoside 5'-phosphate + H2O = a ribonucleoside + phosphate. Its function is as follows. Nucleotidase that shows phosphatase activity on nucleoside 5'-monophosphates. The sequence is that of 5'-nucleotidase SurE from Ectopseudomonas mendocina (strain ymp) (Pseudomonas mendocina).